The chain runs to 263 residues: tRNA (guanine-N(7)-)-methyltransferase (263 aa).

Positions 1 to 39 (MVHHGQMHAQPGVGLRPDTPVASGQLPSTSIRSRRSGIS) are disordered. Positions 82, 107, 136, and 159 each coordinate S-adenosyl-L-methionine. The active site involves Asp159. Residues Lys163, Asp195, and 232–235 (TKYE) each bind substrate.

This sequence belongs to the class I-like SAM-binding methyltransferase superfamily. TrmB family.

The catalysed reaction is guanosine(46) in tRNA + S-adenosyl-L-methionine = N(7)-methylguanosine(46) in tRNA + S-adenosyl-L-homocysteine. It functions in the pathway tRNA modification; N(7)-methylguanine-tRNA biosynthesis. Catalyzes the formation of N(7)-methylguanine at position 46 (m7G46) in tRNA. This chain is tRNA (guanine-N(7)-)-methyltransferase, found in Mycobacterium bovis (strain ATCC BAA-935 / AF2122/97).